A 420-amino-acid chain; its full sequence is Septin-8-A (420 aa).

The Septin-type G domain occupies 39–305 (QGFCFNILCV…ELYRRCKLEE (267 aa)). Residues 49 to 56 (GETGIGKS) form a G1 motif region. GTP is bound by residues 49–56 (GETGIGKS), Gly-104, 185–193 (KADTISKSE), Gly-239, and Arg-254. Residues 101-104 (DTVG) form a G3 motif region. The interval 184–187 (AKAD) is G4 motif. Residues 321–407 (QETYEAKRKE…RRKVAAETLS (87 aa)) are a coiled coil. A disordered region spans residues 393–420 (MNAFNRRKVAAETLSLSQPLKKDKDKKN).

It belongs to the TRAFAC class TrmE-Era-EngA-EngB-Septin-like GTPase superfamily. Septin GTPase family.

This chain is Septin-8-A (sept8a), found in Danio rerio (Zebrafish).